The primary structure comprises 231 residues: Non-fluorescent flavoprotein (231 aa).

It belongs to the bacterial luciferase oxidoreductase family. Homodimer. FMN serves as cofactor.

This chain is Non-fluorescent flavoprotein (luxF), found in Photobacterium phosphoreum.